We begin with the raw amino-acid sequence, 980 residues long: MTTLASSYDPSSFESRLYAQWEAAGYFVPSDTGEPYTVLLPPPNVTGTLHMGHAFQQTLMDALVRYHRMRGYDTLWQVGTDHAGIATEMVVSRNLALEGKGETRDSLGREGFIAKVWEWKAASGDTIERQMRRLGTSSDWSRSTFTMDPQPSAAVNEAFVRWYEQGLIYRGQRLVNWDPVLKTAISDLEVENVEEDGFLWSIRYPLADGVTYEHIEHDADGNETLRETRDYLVVATTRPETMLGDTAVMVHPEDARYLTLHTARIVLPLTGRHVPVITDDYVDRAFGTGVVKVTPAHDFNDYQVGERHNLPLVNLFTADAKIIDPRKQYPDDESPFVNAGIDWRELDQIQRKRLGQHLAYKIPAQYIGLDRYDARKLVLSELEDLSILVETKPHKLQVPRGDRTGQVIEPYLTDQWFVKMDALAKRGLELVESGQIQFVPPNWINTYRHWMENIQDWCISRQLWWGHRIPAWFDDAGHCHVGHDEAEVRAKHGLGAEIALHQDSDVLETWFSSQLWPFSTLGWPDSQAMAERGFARYLPSSVLVTGFDIIFFWVARMIMATDSFTGQVPFRDVYITGLIRDAQGQKMSKSKGNVLDPLDIIDGISIEDLVAKRTNGLMQPRMAEKIEKATRKEFPDGIIAHGADALRFTIAALATHGRDIKFDLGRAEGYKNFCNKLWNATRFVLMNTEGARFTGVPQPRTEAEKWILARLDKVTAETHAHYANYRFDLLAQSLYEFAWNAFCDWFVELAKPALNNQDTDAAASTRHTLLYVLESLLRLLHPLTPFVTEELWQQVVPRLGITTATISLQRFPQVGDVDTSGYATAEADVEWLKSMVSALRRVRSELNVPPSKQVRLLLQADTADERPRVARFASQLSFLLKLERIDWLDAGQDTPPSAAAIVGELTLLVPLEGLVDMDAERMRLDKEIKRVKGEIGKCNGKLGNATFVQNAPAVVVDQERARLADWTTQLAGLREQRGKL.

A 'HIGH' region motif is present at residues 43-53 (PNVTGTLHMGH). The 'KMSKS' region motif lies at 586–590 (KMSKS). K589 contacts ATP. Residues 914-980 (LVDMDAERMR…AGLREQRGKL (67 aa)) are a coiled coil.

This sequence belongs to the class-I aminoacyl-tRNA synthetase family. ValS type 1 subfamily. Monomer.

Its subcellular location is the cytoplasm. The catalysed reaction is tRNA(Val) + L-valine + ATP = L-valyl-tRNA(Val) + AMP + diphosphate. Its function is as follows. Catalyzes the attachment of valine to tRNA(Val). As ValRS can inadvertently accommodate and process structurally similar amino acids such as threonine, to avoid such errors, it has a 'posttransfer' editing activity that hydrolyzes mischarged Thr-tRNA(Val) in a tRNA-dependent manner. The polypeptide is Valine--tRNA ligase (Xanthomonas oryzae pv. oryzae (strain PXO99A)).